The chain runs to 805 residues: Cell division cycle 5-related protein (805 aa).

HTH myb-type domains follow at residues 1–58 (MPRI…DPSI) and 59–108 (KKTE…DQAQ). 2 DNA-binding regions (H-T-H motif) span residues 31–54 (WSRI…YEWL) and 82–104 (WRTI…EYLL). A compositionally biased stretch (basic and acidic residues) spans 108 to 127 (QAKEGDKDEGDDPRKLRPGE). Disordered stretches follow at residues 108–143 (QAKE…DPID), 246–293 (HLEG…HVKK), 409–442 (LSTP…QRSV), and 530–556 (LERR…VLRP). Positions 142-193 (IDMDEDELEMLSEARARLANTQGKKAKRKAREKQLEEARRLAALQKRRELRA) form a coiled coil. A compositionally biased stretch (basic and acidic residues) spans 246–274 (HLEGKMRDEIEQQERKKDKERMKKKKESD). Coiled-coil stretches lie at residues 511-542 (EDAA…VQRE) and 678-804 (YTRA…SKLQ).

Belongs to the CEF1 family. Component of the precatalytic, catalytic and postcatalytic spliceosome complexes.

The protein resides in the nucleus. The protein localises to the cytoplasm. DNA-binding protein involved in cell cycle control. May act as a transcription activator. Plays a role in pre-mRNA splicing as core component of precatalytic, catalytic and postcatalytic spliceosomal complexes. May also play a role in the response to DNA damage (DDR). In Nematostella vectensis (Starlet sea anemone), this protein is Cell division cycle 5-related protein (cdc5l).